Reading from the N-terminus, the 551-residue chain is Scaffold protein D13 ortholog (551 aa).

It belongs to the poxviridae protein D13 family. Homotrimer. Self-assembles to form a layer. Interacts with A17 (via N-terminus); this interaction is necessary for D13 association with membranes.

The protein resides in the membrane. In terms of biological role, scaffold protein which forms a transitory spherical honeycomb lattice providing curvature and rigidity to the convex membrane of crescent and immature virions (IV). This association occurs concomitantly with viral membrane formation. Targeted by the drug rifampicin, which prevents the formation of this lattice, and hence virus morphogenesis. In the presence of rifampicin, irregularly shaped membranes that lack the honeycomb layer accumulate around areas of electron-dense viroplasm. This layer is lost from virions during maturation from IV to mature virion (MV), through the proteolysis of A17 N-terminus. This is Scaffold protein D13 ortholog from Sus scrofa (Pig).